The sequence spans 75 residues: Small ribosomal subunit protein bS18 (75 aa).

It belongs to the bacterial ribosomal protein bS18 family. As to quaternary structure, part of the 30S ribosomal subunit. Forms a tight heterodimer with protein bS6.

In terms of biological role, binds as a heterodimer with protein bS6 to the central domain of the 16S rRNA, where it helps stabilize the platform of the 30S subunit. This chain is Small ribosomal subunit protein bS18, found in Chromobacterium violaceum (strain ATCC 12472 / DSM 30191 / JCM 1249 / CCUG 213 / NBRC 12614 / NCIMB 9131 / NCTC 9757 / MK).